A 273-amino-acid polypeptide reads, in one-letter code: Undecaprenyl-diphosphatase (273 aa).

The next 8 membrane-spanning stretches (helical) occupy residues 4–24 (MELWKAIILGMVEGLTEFAPV), 48–68 (AANTFKVVIQLGSILAAVVVF), 89–109 (LNLIHVIIGLLPAGVLGVLFE), 116–136 (LFSTKTVLIGLVLGALLMIAA), 152–172 (ITYKQAFFVGLMQCLSLWPGF), 193–213 (ADFTFIMAVPIMAGASGLSLL), 222–242 (ADIPFFIAGFFSAFVFALLAI), and 252–272 (IRLVPFAVYRIVLAVVIYFLY).

This sequence belongs to the UppP family.

The protein localises to the cell membrane. It carries out the reaction di-trans,octa-cis-undecaprenyl diphosphate + H2O = di-trans,octa-cis-undecaprenyl phosphate + phosphate + H(+). Functionally, catalyzes the dephosphorylation of undecaprenyl diphosphate (UPP). Confers resistance to bacitracin. In Geobacillus kaustophilus (strain HTA426), this protein is Undecaprenyl-diphosphatase.